The sequence spans 316 residues: Ornithine carbamoyltransferase (316 aa).

Residues 57-60 (STRT), Gln84, Arg108, and 135-138 (HPCQ) contribute to the carbamoyl phosphate site. L-ornithine is bound by residues Asn166, Asp230, and 234–235 (SM). Residues 269–270 (CL) and Arg297 contribute to the carbamoyl phosphate site.

It belongs to the aspartate/ornithine carbamoyltransferase superfamily. OTCase family.

It is found in the cytoplasm. The catalysed reaction is carbamoyl phosphate + L-ornithine = L-citrulline + phosphate + H(+). It functions in the pathway amino-acid biosynthesis; L-arginine biosynthesis; L-arginine from L-ornithine and carbamoyl phosphate: step 1/3. Reversibly catalyzes the transfer of the carbamoyl group from carbamoyl phosphate (CP) to the N(epsilon) atom of ornithine (ORN) to produce L-citrulline. In Bacillus cereus (strain ZK / E33L), this protein is Ornithine carbamoyltransferase.